A 205-amino-acid polypeptide reads, in one-letter code: LexA repressor (205 aa).

Positions 28 to 48 form a DNA-binding region, H-T-H motif; it reads RAEIAKRLGFKSANAAEEHLK. Catalysis depends on for autocatalytic cleavage activity residues Ser122 and Lys159.

This sequence belongs to the peptidase S24 family. Homodimer.

It catalyses the reaction Hydrolysis of Ala-|-Gly bond in repressor LexA.. In terms of biological role, represses a number of genes involved in the response to DNA damage (SOS response), including recA and lexA. In the presence of single-stranded DNA, RecA interacts with LexA causing an autocatalytic cleavage which disrupts the DNA-binding part of LexA, leading to derepression of the SOS regulon and eventually DNA repair. The polypeptide is LexA repressor (Shewanella woodyi (strain ATCC 51908 / MS32)).